Reading from the N-terminus, the 129-residue chain is V-type proton ATPase subunit F 2 (129 aa).

This sequence belongs to the V-ATPase F subunit family. In terms of assembly, V-ATPase is a heteromultimeric enzyme made up of two complexes: the ATP-hydrolytic V1 complex and the proton translocation V0 complex. The V1 complex consists of three catalytic AB heterodimers that form a heterohexamer, three peripheral stalks each consisting of EG heterodimers, one central rotor including subunits D and F, and the regulatory subunits C and H. The proton translocation complex V0 consists of the proton transport subunit a, a ring of proteolipid subunits c9c'', rotary subunit d, subunits e and f, and the accessory subunits VhaAC45 and ATP6AP2.

In terms of biological role, subunit of the V1 complex of vacuolar(H+)-ATPase (V-ATPase), a multisubunit enzyme composed of a peripheral complex (V1) that hydrolyzes ATP and a membrane integral complex (V0) that translocates protons. V-ATPase is responsible for acidifying and maintaining the pH of intracellular compartments and in some cell types, is targeted to the plasma membrane, where it is responsible for acidifying the extracellular environment. This chain is V-type proton ATPase subunit F 2 (Vha14-2), found in Drosophila melanogaster (Fruit fly).